A 340-amino-acid chain; its full sequence is Aliphatic sulfonates import ATP-binding protein SsuB 1 (340 aa).

The disordered stretch occupies residues Thr-44–Gly-72. The ABC transporter domain maps to Val-80–Leu-299. Position 112 to 119 (Gly-112 to Ser-119) interacts with ATP.

Belongs to the ABC transporter superfamily. Aliphatic sulfonates importer (TC 3.A.1.17.2) family. The complex is composed of two ATP-binding proteins (SsuB), two transmembrane proteins (SsuC) and a solute-binding protein (SsuA).

It is found in the cell inner membrane. The enzyme catalyses ATP + H2O + aliphatic sulfonate-[sulfonate-binding protein]Side 1 = ADP + phosphate + aliphatic sulfonateSide 2 + [sulfonate-binding protein]Side 1.. Part of the ABC transporter complex SsuABC involved in aliphatic sulfonates import. Responsible for energy coupling to the transport system. The chain is Aliphatic sulfonates import ATP-binding protein SsuB 1 from Paraburkholderia xenovorans (strain LB400).